Reading from the N-terminus, the 126-residue chain is uncharacterized protein (126 aa).

This is an uncharacterized protein from Mycoplasmopsis pulmonis (strain UAB CTIP) (Mycoplasma pulmonis).